Consider the following 78-residue polypeptide: Small ribosomal subunit protein bS18 (78 aa).

The protein belongs to the bacterial ribosomal protein bS18 family. Part of the 30S ribosomal subunit. Forms a tight heterodimer with protein bS6.

Its function is as follows. Binds as a heterodimer with protein bS6 to the central domain of the 16S rRNA, where it helps stabilize the platform of the 30S subunit. The protein is Small ribosomal subunit protein bS18 of Geobacillus sp. (strain WCH70).